The primary structure comprises 673 residues: UvrABC system protein B (673 aa).

In terms of domain architecture, Helicase ATP-binding spans 24 to 182 (EGVERNDPAQ…YSFVEILYNR (159 aa)). 37 to 44 (GVTGSGKT) serves as a coordination point for ATP. The Beta-hairpin signature appears at 90-113 (YYDYYQPEAFMPTSGLYIEKDLAI). Positions 429–591 (QIDDLLDEIQ…ITPITVNKSK (163 aa)) constitute a Helicase C-terminal domain. A UVR domain is found at 634–669 (TKMIDRAKKDMDKAAKDLDFVEAARYRDEMFALQKI).

Belongs to the UvrB family. As to quaternary structure, forms a heterotetramer with UvrA during the search for lesions. Interacts with UvrC in an incision complex.

It localises to the cytoplasm. The UvrABC repair system catalyzes the recognition and processing of DNA lesions. A damage recognition complex composed of 2 UvrA and 2 UvrB subunits scans DNA for abnormalities. Upon binding of the UvrA(2)B(2) complex to a putative damaged site, the DNA wraps around one UvrB monomer. DNA wrap is dependent on ATP binding by UvrB and probably causes local melting of the DNA helix, facilitating insertion of UvrB beta-hairpin between the DNA strands. Then UvrB probes one DNA strand for the presence of a lesion. If a lesion is found the UvrA subunits dissociate and the UvrB-DNA preincision complex is formed. This complex is subsequently bound by UvrC and the second UvrB is released. If no lesion is found, the DNA wraps around the other UvrB subunit that will check the other stand for damage. This is UvrABC system protein B from Cytophaga hutchinsonii (strain ATCC 33406 / DSM 1761 / CIP 103989 / NBRC 15051 / NCIMB 9469 / D465).